We begin with the raw amino-acid sequence, 371 residues long: Ligninase LG2 (371 aa).

An N-terminal signal peptide occupies residues 1-21 (MAFKQLFAAITVALSLTAANA). The propeptide occupies 22 to 28 (AVVKEKR). 4 disulfides stabilise this stretch: cysteine 31/cysteine 43, cysteine 42/cysteine 313, cysteine 62/cysteine 148, and cysteine 277/cysteine 345. Histidine 75 acts as the Proton acceptor in catalysis. Ca(2+)-binding residues include aspartate 76, glycine 94, aspartate 96, and serine 98. Residue tryptophan 199 is modified to 3-hydroxytryptophan. Histidine 204 provides a ligand contact to heme b. Positions 205, 222, 224, 227, and 229 each coordinate Ca(2+). Asparagine 285 carries N-linked (GlcNAc...) asparagine glycosylation.

Belongs to the peroxidase family. Ligninase subfamily. Ca(2+) serves as cofactor. Heme b is required as a cofactor.

It catalyses the reaction 1-(3,4-dimethoxyphenyl)-2-(2-methoxyphenoxy)propane-1,3-diol + H2O2 = 3,4-dimethoxybenzaldehyde + guaiacol + glycolaldehyde + H2O. The catalysed reaction is 2 (3,4-dimethoxyphenyl)methanol + H2O2 = 2 (3,4-dimethoxyphenyl)methanol radical + 2 H2O. The protein operates within secondary metabolite metabolism; lignin degradation. Its function is as follows. Depolymerization of lignin. Catalyzes the C(alpha)-C(beta) cleavage of the propyl side chains of lignin. This chain is Ligninase LG2 (GLG2), found in Phanerodontia chrysosporium (White-rot fungus).